The chain runs to 494 residues: Cheilanthifoline synthase (494 aa).

Residues 4–24 (TIWLIISTVIIVLGIAKFLLG) form a helical membrane-spanning segment. Residue cysteine 437 coordinates heme.

The protein belongs to the cytochrome P450 family. It depends on heme as a cofactor. Expressed in roots and at lower levels in stems, leaves and plantlets.

It localises to the endoplasmic reticulum membrane. It carries out the reaction (S)-scoulerine + reduced [NADPH--hemoprotein reductase] + O2 = (S)-cheilanthifoline + oxidized [NADPH--hemoprotein reductase] + 2 H2O + H(+). Its function is as follows. Methylenedioxy bridge-forming cytochrome P450 involved in the biosynthesis of isoquinoline alkaloids. Converts (S)-scoulerine into (S)-cheilanthifoline, a precursor of sanguinarine. Catalyzes an oxidative reaction that does not incorporate oxygen into the product. The sequence is that of Cheilanthifoline synthase from Argemone mexicana (Mexican prickly poppy).